The sequence spans 435 residues: GTPase Der (435 aa).

EngA-type G domains follow at residues 4–167 (PVVA…PAEK) and 175–350 (ISFS…DNQN). GTP contacts are provided by residues 10-17 (GQPNVGKS), 57-61 (DTGGI), 119-122 (NKAD), 181-188 (GRPNVGKS), 228-232 (DTAGI), and 293-296 (NKWD). The 85-residue stretch at 351–435 (QRIQSSVLND…PIKILPRKRK (85 aa)) folds into the KH-like domain.

This sequence belongs to the TRAFAC class TrmE-Era-EngA-EngB-Septin-like GTPase superfamily. EngA (Der) GTPase family. As to quaternary structure, associates with the 50S ribosomal subunit.

Functionally, GTPase that plays an essential role in the late steps of ribosome biogenesis. The chain is GTPase Der from Lactobacillus acidophilus (strain ATCC 700396 / NCK56 / N2 / NCFM).